Reading from the N-terminus, the 254-residue chain is NAD-dependent protein deacylase (254 aa).

One can recognise a Deacetylase sirtuin-type domain in the interval 1 to 250 (MERLEEARKR…LPPSPEDQAE (250 aa)). 22 to 41 (GAGISKPSGIPTFRDAEGLW) lines the NAD(+) pocket. Residues Y66 and R69 each coordinate substrate. Position 104-107 (104-107 (QNVD)) interacts with NAD(+). The active-site Proton acceptor is H122. C130, C133, C149, and C152 together coordinate Zn(2+). Residues 189–191 (GTS), 215–217 (NPE), and A233 contribute to the NAD(+) site.

It belongs to the sirtuin family. Class III subfamily. Requires Zn(2+) as cofactor.

Its subcellular location is the cytoplasm. The catalysed reaction is N(6)-acetyl-L-lysyl-[protein] + NAD(+) + H2O = 2''-O-acetyl-ADP-D-ribose + nicotinamide + L-lysyl-[protein]. It carries out the reaction N(6)-succinyl-L-lysyl-[protein] + NAD(+) + H2O = 2''-O-succinyl-ADP-D-ribose + nicotinamide + L-lysyl-[protein]. NAD-dependent lysine deacetylase and desuccinylase that specifically removes acetyl and succinyl groups on target proteins. Modulates the activities of several proteins which are inactive in their acylated form. This Thermus thermophilus (strain ATCC BAA-163 / DSM 7039 / HB27) protein is NAD-dependent protein deacylase.